The sequence spans 93 residues: UPF0337 protein Bd3330 (93 aa).

The protein belongs to the UPF0337 (CsbD) family.

In Bdellovibrio bacteriovorus (strain ATCC 15356 / DSM 50701 / NCIMB 9529 / HD100), this protein is UPF0337 protein Bd3330.